The primary structure comprises 501 residues: Cobyric acid synthase (501 aa).

The region spanning 253-450 (EIEIAVLKLP…LHGIFENGRW (198 aa)) is the GATase cobBQ-type domain. Catalysis depends on Cys-334, which acts as the Nucleophile. His-442 is an active-site residue.

This sequence belongs to the CobB/CobQ family. CobQ subfamily.

It participates in cofactor biosynthesis; adenosylcobalamin biosynthesis. Catalyzes amidations at positions B, D, E, and G on adenosylcobyrinic A,C-diamide. NH(2) groups are provided by glutamine, and one molecule of ATP is hydrogenolyzed for each amidation. This is Cobyric acid synthase from Prochlorococcus marinus (strain MIT 9313).